The sequence spans 179 residues: Inner membrane-spanning protein YciB (179 aa).

Helical transmembrane passes span 22-42 (IYAATAALIVATAIVLIYSWV), 50-70 (MALITFVLVVVFGGLTLFFHN), 76-96 (WKVTVIYALFAGALLVSQWVM), 121-141 (LAWAVFFILCGLANIYIAFWL), and 149-169 (FKVFGLTALTLIFTLLSGIYI).

The protein belongs to the YciB family.

The protein localises to the cell inner membrane. Its function is as follows. Plays a role in cell envelope biogenesis, maintenance of cell envelope integrity and membrane homeostasis. In Escherichia coli O127:H6 (strain E2348/69 / EPEC), this protein is Inner membrane-spanning protein YciB.